The sequence spans 273 residues: Phosphate import ATP-binding protein PstB (273 aa).

One can recognise an ABC transporter domain in the interval 19-258; sequence LSLQNVTISY…FNDTDKIFNA (240 aa). 51 to 58 contacts ATP; sequence GPSGCGKS.

This sequence belongs to the ABC transporter superfamily. Phosphate importer (TC 3.A.1.7) family. As to quaternary structure, the complex is composed of two ATP-binding proteins (PstB), two transmembrane proteins (PstC and PstA) and a solute-binding protein (PstS).

Its subcellular location is the cell inner membrane. The enzyme catalyses phosphate(out) + ATP + H2O = ADP + 2 phosphate(in) + H(+). Its function is as follows. Part of the ABC transporter complex PstSACB involved in phosphate import. Responsible for energy coupling to the transport system. In Synechococcus sp. (strain CC9605), this protein is Phosphate import ATP-binding protein PstB.